The sequence spans 162 residues: Probable ergosterol biosynthetic protein 28 homolog (162 aa).

A run of 4 helical transmembrane segments spans residues 7-25 (AWMS…MCYA), 40-60 (LSRA…VLIF), 69-89 (IAHI…VFFY), and 96-116 (IVTV…LTFL).

This sequence belongs to the ERG28 family. As to expression, expressed in tissues including muscles, intestine and neurons.

It is found in the endoplasmic reticulum membrane. It localises to the cell projection. The protein resides in the dendrite. Its function is as follows. Promotes the translocation of slo-1 potassium ion channels from the endoplasmic reticulum to its final destination at the plasma membrane, probably by shielding from premature proteasomal degradation in the endoplasmic reticulum. Maintains the levels of slo-1 potassium ion channel at the presynaptic neurons. The sequence is that of Probable ergosterol biosynthetic protein 28 homolog from Caenorhabditis elegans.